The chain runs to 754 residues: Exocyst complex component EXO84A (754 aa).

Disordered regions lie at residues 514 to 540 and 734 to 754; these read RILP…EQRE and GHGE…YTSN. Polar residues predominate over residues 518–527; that stretch reads QGTSQSTPRR. Positions 528-540 are enriched in basic and acidic residues; sequence GSSDRQNRPEQRE. Polar residues predominate over residues 741-754; the sequence is TSPSVSSAKSYTSN.

The protein belongs to the EXO84 family. As to quaternary structure, the exocyst complex is composed of SEC3, SEC5, SEC6, SEC8, SEC10, EXO70A1 and EXO84.

Functionally, component of the exocyst complex involved in the docking of exocytic vesicles with fusion sites on the plasma membrane during regulated or polarized secretion. Involved in polarized cell growth and organ morphogenesis. During cytokinesis, involved in cell plate initiation, cell plate maturation and formation of new primary cell wall. The sequence is that of Exocyst complex component EXO84A (EXO84A) from Arabidopsis thaliana (Mouse-ear cress).